Consider the following 181-residue polypeptide: 6,7-dimethyl-8-ribityllumazine synthase (181 aa).

Residues Tyr-30, 61-63, and 87-89 each bind 5-amino-6-(D-ribitylamino)uracil; these read ALE and CII. 92–93 is a binding site for (2S)-2-hydroxy-3-oxobutyl phosphate; sequence ET. His-95 (proton donor) is an active-site residue. Asn-120 is a binding site for 5-amino-6-(D-ribitylamino)uracil. Arg-134 serves as a coordination point for (2S)-2-hydroxy-3-oxobutyl phosphate.

The protein belongs to the DMRL synthase family.

It carries out the reaction (2S)-2-hydroxy-3-oxobutyl phosphate + 5-amino-6-(D-ribitylamino)uracil = 6,7-dimethyl-8-(1-D-ribityl)lumazine + phosphate + 2 H2O + H(+). Its pathway is cofactor biosynthesis; riboflavin biosynthesis; riboflavin from 2-hydroxy-3-oxobutyl phosphate and 5-amino-6-(D-ribitylamino)uracil: step 1/2. Its function is as follows. Catalyzes the formation of 6,7-dimethyl-8-ribityllumazine by condensation of 5-amino-6-(D-ribitylamino)uracil with 3,4-dihydroxy-2-butanone 4-phosphate. This is the penultimate step in the biosynthesis of riboflavin. The polypeptide is 6,7-dimethyl-8-ribityllumazine synthase (Beijerinckia indica subsp. indica (strain ATCC 9039 / DSM 1715 / NCIMB 8712)).